We begin with the raw amino-acid sequence, 1358 residues long: Probable serine/threonine-protein kinase ifkB (1358 aa).

Positions 1–582 (MIGKGGFGVV…TKQLLESGLL (582 aa)) constitute a Protein kinase domain. Residues 2–10 (IGKGGFGVV) and Lys-25 each bind ATP. Positions 125 to 359 (GANNTAGGGD…SSSRKKPPKE (235 aa)) are disordered. Over residues 136–148 (VSNANSNKSMIVG) the composition is skewed to polar residues. The segment covering 149–196 (NNNKKLTLSSSNTSSSSSLLSNNKSKILNTSKSTSTNTSTSTSTSNTN) has biased composition (low complexity). A compositionally biased stretch (basic residues) spans 197 to 208 (KNKKISKKKKSK). Residues 258–285 (NNNNDSNNNYHSDNESDSFSGSISMSDG) are compositionally biased toward low complexity. The segment covering 306–333 (DDNENDDDDEEDDDDEYDEEDDDYETFD) has biased composition (acidic residues). Residues 342 to 351 (SNNSKLSTSS) are compositionally biased toward low complexity. The active-site Proton acceptor is Asp-413. 2 disordered regions span residues 445–470 (DDLN…TAQQ) and 1148–1204 (GSGG…QQTS). A compositionally biased stretch (low complexity) spans 447 to 466 (LNSSTSNAANNINLSSSTNS). Over residues 1148–1172 (GSGGSGGSGGGSSMSSGGGGGGNSN) the composition is skewed to gly residues. Positions 1185-1199 (SNQSTSSSGNSNNSN) are enriched in low complexity.

The protein belongs to the protein kinase superfamily. Ser/Thr protein kinase family. GCN2 subfamily.

The catalysed reaction is L-seryl-[protein] + ATP = O-phospho-L-seryl-[protein] + ADP + H(+). The enzyme catalyses L-threonyl-[protein] + ATP = O-phospho-L-threonyl-[protein] + ADP + H(+). In Dictyostelium discoideum (Social amoeba), this protein is Probable serine/threonine-protein kinase ifkB (ifkB).